Here is a 418-residue protein sequence, read N- to C-terminus: Serine--tRNA ligase (418 aa).

227-229 contacts L-serine; it reads TSE. Residues 258-260 and Val-274 contribute to the ATP site; that span reads RRE. Glu-281 serves as a coordination point for L-serine. Residue 345–348 coordinates ATP; sequence ELTS. Thr-380 is a binding site for L-serine.

This sequence belongs to the class-II aminoacyl-tRNA synthetase family. Type-1 seryl-tRNA synthetase subfamily. In terms of assembly, homodimer. The tRNA molecule binds across the dimer.

The protein resides in the cytoplasm. The catalysed reaction is tRNA(Ser) + L-serine + ATP = L-seryl-tRNA(Ser) + AMP + diphosphate + H(+). The enzyme catalyses tRNA(Sec) + L-serine + ATP = L-seryl-tRNA(Sec) + AMP + diphosphate + H(+). The protein operates within aminoacyl-tRNA biosynthesis; selenocysteinyl-tRNA(Sec) biosynthesis; L-seryl-tRNA(Sec) from L-serine and tRNA(Sec): step 1/1. Functionally, catalyzes the attachment of serine to tRNA(Ser). Is also able to aminoacylate tRNA(Sec) with serine, to form the misacylated tRNA L-seryl-tRNA(Sec), which will be further converted into selenocysteinyl-tRNA(Sec). This is Serine--tRNA ligase from Rhodococcus jostii (strain RHA1).